Here is a 251-residue protein sequence, read N- to C-terminus: 5'-nucleotidase SurE (251 aa).

A divalent metal cation is bound by residues Asp-8, Asp-9, Ser-42, and Asn-94.

Belongs to the SurE nucleotidase family. It depends on a divalent metal cation as a cofactor.

The protein localises to the cytoplasm. The catalysed reaction is a ribonucleoside 5'-phosphate + H2O = a ribonucleoside + phosphate. In terms of biological role, nucleotidase that shows phosphatase activity on nucleoside 5'-monophosphates. This Hydrogenovibrio crunogenus (strain DSM 25203 / XCL-2) (Thiomicrospira crunogena) protein is 5'-nucleotidase SurE.